Here is a 270-residue protein sequence, read N- to C-terminus: Diaminopimelate epimerase (270 aa).

Substrate is bound by residues N15, Q49, and N66. C75 serves as the catalytic Proton donor. Substrate contacts are provided by residues 76–77 (GN), N155, N187, and 204–205 (ER). C213 (proton acceptor) is an active-site residue. 214–215 (GS) provides a ligand contact to substrate.

It belongs to the diaminopimelate epimerase family. Homodimer.

The protein resides in the cytoplasm. The enzyme catalyses (2S,6S)-2,6-diaminopimelate = meso-2,6-diaminopimelate. Its pathway is amino-acid biosynthesis; L-lysine biosynthesis via DAP pathway; DL-2,6-diaminopimelate from LL-2,6-diaminopimelate: step 1/1. Its function is as follows. Catalyzes the stereoinversion of LL-2,6-diaminopimelate (L,L-DAP) to meso-diaminopimelate (meso-DAP), a precursor of L-lysine and an essential component of the bacterial peptidoglycan. In Rickettsia akari (strain Hartford), this protein is Diaminopimelate epimerase.